Reading from the N-terminus, the 347-residue chain is High mobility group protein 20A (347 aa).

2 stretches are compositionally biased toward polar residues: residues 1-10 (MENLMTSSTL) and 40-49 (SGATSSTNNP). Disordered stretches follow at residues 1–113 (MENL…YVRF) and 179–211 (FSRK…TEVK). Residues 55–66 (LSQGQLLQSESS) are compositionally biased toward low complexity. Residues 72-82 (NEQRHEDEQRS) show a composition bias toward basic and acidic residues. The span at 83–96 (KRGGWSKGRKRKKP) shows a compositional bias: basic residues. The segment at residues 103–171 (PKSPLTGYVR…RYMKELEQYQ (69 aa)) is a DNA-binding region (HMG box). Phosphoserine is present on Ser105. The span at 182-211 (KTQDRQKGKSHRQDAARQATHDHEKETEVK) shows a compositional bias: basic and acidic residues. The stretch at 229–273 (SKAREAELRQLRKSNMEFEERNAALQKHVESMRTAVEKLEVDVIQ) forms a coiled coil.

In terms of assembly, interacts with DTNB. As to expression, ubiquitous.

Its subcellular location is the nucleus. Functionally, plays a role in neuronal differentiation as chromatin-associated protein. Acts as inhibitor of HMG20B. Overcomes the repressive effects of the neuronal silencer REST and induces the activation of neuronal-specific genes. Involved in the recruitment of the histone methyltransferase KMT2A/MLL1 and consequent increased methylation of histone H3 lysine 4. This is High mobility group protein 20A (HMG20A) from Homo sapiens (Human).